The primary structure comprises 130 residues: Immunoglobulin kappa chain variable 9-120 (130 aa).

An N-terminal signal peptide occupies residues 1-22 (MDMRAPAQIFGFLLLLFQGTRC). Residues 23–45 (DIQMTQSPSSLSASLGERVSLTC) are framework-1. A disulfide bond links cysteine 45 and cysteine 110. Positions 46–56 (RASQDIGSSLN) are complementarity-determining-1. Residues 57 to 71 (WLQQEPDGTIKRLIY) form a framework-2 region. Positions 72-78 (ATSSLDS) are complementarity-determining-2. The interval 79 to 110 (GVPKRFSGSRSGSDYSLTISSLESEDFVDYYC) is framework-3. Residues 111 to 119 (LQYASSPWT) are complementarity-determining-3. The tract at residues 120–129 (FGGGTKLEIK) is framework-4.

The sequence is that of Immunoglobulin kappa chain variable 9-120 from Mus musculus (Mouse).